Consider the following 484-residue polypeptide: Poly(A) RNA polymerase GLD2 (484 aa).

Phosphoserine is present on residues Ser-62 and Ser-69. A Nuclear localization signal motif is present at residues 76–92 (KRISDEKAFRLDGKRQR). The residue at position 95 (Ser-95) is a Phosphoserine. 2 residues coordinate Mg(2+): Asp-213 and Asp-215. The 55-residue stretch at 386 to 440 (SLGDLLLGFLKYYATEFDWNTQMISVREAKAIPRPDDMEWRNKYICVEEPFDGTN) folds into the PAP-associated domain.

It belongs to the DNA polymerase type-B-like family. GLD2 subfamily. Interacts with CPEB1, CPEB2, CPSF1 and PABPC1. Interacts with QKI isoform QKI7; promoting recruitment to miRNA miR-122 and miR-122 stabilization. The cofactor is Mg(2+). Mn(2+) is required as a cofactor.

The protein resides in the cytoplasm. It localises to the nucleus. It carries out the reaction RNA(n) + ATP = RNA(n)-3'-adenine ribonucleotide + diphosphate. Functionally, cytoplasmic poly(A) RNA polymerase that adds successive AMP monomers to the 3'-end of specific RNAs, forming a poly(A) tail. In contrast to the canonical nuclear poly(A) RNA polymerase, it only adds poly(A) to selected cytoplasmic mRNAs. Does not play a role in replication-dependent histone mRNA degradation. Adds a single nucleotide to the 3' end of specific miRNAs, monoadenylation stabilizes and prolongs the activity of some but not all miRNAs. This chain is Poly(A) RNA polymerase GLD2, found in Rattus norvegicus (Rat).